The following is a 72-amino-acid chain: UPF0154 protein BPUM_1692 (72 aa).

The chain crosses the membrane as a helical span at residues 4–24 (WVVILVGVVALLAGVALGFFI).

Belongs to the UPF0154 family.

Its subcellular location is the cell membrane. The polypeptide is UPF0154 protein BPUM_1692 (Bacillus pumilus (strain SAFR-032)).